Here is an 871-residue protein sequence, read N- to C-terminus: Tegument protein UL47 homolog (871 aa).

Positions 1–212 are disordered; that stretch reads MDQHHGARGG…DEDDMEVIRD (212 aa). The Nuclear localization signal signature appears at 13 to 33; sequence IRRPRRSIESRSHPFRATGNT. Composition is skewed to polar residues over residues 30–41 and 59–81; these read TGNTQRTYSTPR and EQAS…STSF. 3 stretches are compositionally biased toward acidic residues: residues 114 to 134, 146 to 155, and 185 to 207; these read SSSE…EEDQ, SSDENDEEED, and SESE…EDDM.

Belongs to the alphaherpesvirinae HHV-1 UL47 family. Interacts with US3 kinase. Interacts with UL31 and UL34; these interactions seem important for efficient virion nuclear egress. Interacts with UL41/VHS. Post-translationally, phosphorylated by US3. This phosphorylation is required for proper nuclear localization.

The protein resides in the virion tegument. It is found in the host nucleus. It localises to the host cytoplasm. Its function is as follows. Tegument protein that can bind to various RNA transcripts. Plays a role in the attenuation of selective viral and cellular mRNA degradation by modulating the activity of host shutoff RNase UL41/VHS. Also plays a role in the primary envelopment of virions in the perinuclear space, probably by interacting with two nuclear egress proteins UL31 and UL34. The sequence is that of Tegument protein UL47 homolog from Equus caballus (Horse).